Consider the following 105-residue polypeptide: Large ribosomal subunit protein uL24 (105 aa).

It belongs to the universal ribosomal protein uL24 family. As to quaternary structure, part of the 50S ribosomal subunit.

Functionally, one of two assembly initiator proteins, it binds directly to the 5'-end of the 23S rRNA, where it nucleates assembly of the 50S subunit. Its function is as follows. One of the proteins that surrounds the polypeptide exit tunnel on the outside of the subunit. The chain is Large ribosomal subunit protein uL24 from Rhizorhabdus wittichii (strain DSM 6014 / CCUG 31198 / JCM 15750 / NBRC 105917 / EY 4224 / RW1) (Sphingomonas wittichii).